The chain runs to 443 residues: MSELNMTPREIVAYLDEYIIGQKEAKKSIAIAFRNRYRRLQLEKSLQEEITPKNILMIGSTGVGKTEIARRIAKIMKLPFVKVEASKYTEVGFVGRDVESMVRDLVNNSVLLVENEHKEKLKDKIEEAVIEKIAKKLLPPLPNGVSEEKKQEYANSLLKMQQRIVQGELDSREIEIEVRKKSIEIDSNVPPEILRVQENVIKFFHKEQDKVKKTLSVKEAKEALKAEISDTLLDGEAIKMEGLKRAESSGVIFIDEIDKIAVSSKEGGRQDPSKEGVQRDLLPIVEGSVVNTKYGPIKTEHILFIAAGAFHLSKPSDLIPELQGRFPLRVELESLTEEIMYMILTQTKTSIIKQYQALLKVEGVGIAFEDNAIKELAKLSYNANQKSEDIGARRLHTTIEKVLEDISFEAENYSGQNVTITKELVQSKLEDLVADENLVKYIL.

ATP is bound by residues Ile-20, 62 to 67 (GVGKTE), Asp-255, Glu-321, and Arg-393.

It belongs to the ClpX chaperone family. HslU subfamily. In terms of assembly, a double ring-shaped homohexamer of HslV is capped on each side by a ring-shaped HslU homohexamer. The assembly of the HslU/HslV complex is dependent on binding of ATP.

It localises to the cytoplasm. Its function is as follows. ATPase subunit of a proteasome-like degradation complex; this subunit has chaperone activity. The binding of ATP and its subsequent hydrolysis by HslU are essential for unfolding of protein substrates subsequently hydrolyzed by HslV. HslU recognizes the N-terminal part of its protein substrates and unfolds these before they are guided to HslV for hydrolysis. In Helicobacter pylori (strain Shi470), this protein is ATP-dependent protease ATPase subunit HslU.